We begin with the raw amino-acid sequence, 364 residues long: Tyrosine--tRNA ligase (364 aa).

5 residues coordinate L-tyrosine: Y41, Y167, Q171, D174, and Q189. A 'KMSKS' region motif is present at residues 238–242 (KMSKS). K241 is an ATP binding site.

Belongs to the class-I aminoacyl-tRNA synthetase family. TyrS type 4 subfamily. Homodimer.

The protein resides in the cytoplasm. The enzyme catalyses tRNA(Tyr) + L-tyrosine + ATP = L-tyrosyl-tRNA(Tyr) + AMP + diphosphate + H(+). Catalyzes the attachment of tyrosine to tRNA(Tyr) in a two-step reaction: tyrosine is first activated by ATP to form Tyr-AMP and then transferred to the acceptor end of tRNA(Tyr). The sequence is that of Tyrosine--tRNA ligase from Sulfurisphaera tokodaii (strain DSM 16993 / JCM 10545 / NBRC 100140 / 7) (Sulfolobus tokodaii).